The chain runs to 428 residues: Glutamate-1-semialdehyde 2,1-aminomutase (428 aa).

An N6-(pyridoxal phosphate)lysine modification is found at Lys-267.

The protein belongs to the class-III pyridoxal-phosphate-dependent aminotransferase family. HemL subfamily. In terms of assembly, homodimer. Pyridoxal 5'-phosphate serves as cofactor.

It localises to the cytoplasm. The enzyme catalyses (S)-4-amino-5-oxopentanoate = 5-aminolevulinate. The protein operates within porphyrin-containing compound metabolism; protoporphyrin-IX biosynthesis; 5-aminolevulinate from L-glutamyl-tRNA(Glu): step 2/2. Its pathway is porphyrin-containing compound metabolism; chlorophyll biosynthesis. This is Glutamate-1-semialdehyde 2,1-aminomutase from Prochlorococcus marinus (strain MIT 9313).